We begin with the raw amino-acid sequence, 353 residues long: MNGTEGPFFYVPMLNTTGIVRSPYDYPQYYLVNPAAYAALGAYMFLLILLGFPINFLTLYVTIEHKKLRTPLNYILLNLAVANLFMVFGGFTTTMYTSMHGYFVLGRLGCNLEGFFATLGGEIGLWSLVVLAIERWMVVCKPISNFRFGENHAIMGLAFTWIMACACAVPPLVGWSRYIPEGMQCSCGVDYYTRAEGFNNESFVVYMFICHFLIPMAVVFFCYGRLLCAVKEAAAAQQESETTQRAEREVTRMVVIMVVAFLICWLPYAGVAWWIFTHQGSEFGPVFMTIPAFFAKSSSIYNPLIYICMNKQFRHCMITTLCCGKNPFEEEEGASTTSKTEASSVSSSSVSPA.

The Extracellular portion of the chain corresponds to 1–36; that stretch reads MNGTEGPFFYVPMLNTTGIVRSPYDYPQYYLVNPAA. Asn2 and Asn15 each carry an N-linked (GlcNAc...) asparagine glycan. A helical transmembrane segment spans residues 37–61; it reads YAALGAYMFLLILLGFPINFLTLYV. Residues 62–73 lie on the Cytoplasmic side of the membrane; the sequence is TIEHKKLRTPLN. Residues 74 to 96 traverse the membrane as a helical segment; that stretch reads YILLNLAVANLFMVFGGFTTTMY. At 97-110 the chain is on the extracellular side; the sequence is TSMHGYFVLGRLGC. Cys110 and Cys187 are disulfide-bonded. Residues 111 to 133 form a helical membrane-spanning segment; the sequence is NLEGFFATLGGEIGLWSLVVLAI. Residues 134–136 carry the 'Ionic lock' involved in activated form stabilization motif; that stretch reads ERW. Over 134–152 the chain is Cytoplasmic; sequence ERWMVVCKPISNFRFGENH. The helical transmembrane segment at 153–173 threads the bilayer; sequence AIMGLAFTWIMACACAVPPLV. Over 174-202 the chain is Extracellular; the sequence is GWSRYIPEGMQCSCGVDYYTRAEGFNNES. Asn200 carries an N-linked (GlcNAc...) asparagine glycan. A helical membrane pass occupies residues 203–224; the sequence is FVVYMFICHFLIPMAVVFFCYG. Over 225–252 the chain is Cytoplasmic; that stretch reads RLLCAVKEAAAAQQESETTQRAEREVTR. The helical transmembrane segment at 253-274 threads the bilayer; it reads MVVIMVVAFLICWLPYAGVAWW. Residues 275–286 are Extracellular-facing; the sequence is IFTHQGSEFGPV. A helical membrane pass occupies residues 287–308; that stretch reads FMTIPAFFAKSSSIYNPLIYIC. Lys296 is subject to N6-(retinylidene)lysine. At 309 to 353 the chain is on the cytoplasmic side; the sequence is MNKQFRHCMITTLCCGKNPFEEEEGASTTSKTEASSVSSSSVSPA. Residues Cys322 and Cys323 are each lipidated (S-palmitoyl cysteine). A disordered region spans residues 330 to 353; sequence EEEGASTTSKTEASSVSSSSVSPA. Low complexity predominate over residues 334–353; it reads ASTTSKTEASSVSSSSVSPA.

The protein belongs to the G-protein coupled receptor 1 family. Opsin subfamily. Phosphorylated on some or all of the serine and threonine residues present in the C-terminal region. Post-translationally, contains one covalently linked retinal chromophore.

It localises to the membrane. It is found in the cell projection. Its subcellular location is the cilium. The protein localises to the photoreceptor outer segment. Its function is as follows. Photoreceptor required for image-forming vision at low light intensity. While most salt water fish species use retinal as chromophore, most freshwater fish use 3-dehydroretinal, or a mixture of retinal and 3-dehydroretinal. Light-induced isomerization of 11-cis to all-trans retinal triggers a conformational change that activates signaling via G-proteins. Subsequent receptor phosphorylation mediates displacement of the bound G-protein alpha subunit by arrestin and terminates signaling. This chain is Rhodopsin (rho), found in Tetraodon nigroviridis (Spotted green pufferfish).